We begin with the raw amino-acid sequence, 287 residues long: Phosphatidylserine decarboxylase proenzyme (287 aa).

Residues D90, H147, and S252 each act as charge relay system; for autoendoproteolytic cleavage activity in the active site. Residue S252 is the Schiff-base intermediate with substrate; via pyruvic acid; for decarboxylase activity of the active site. Position 252 is a pyruvic acid (Ser); by autocatalysis (S252).

This sequence belongs to the phosphatidylserine decarboxylase family. PSD-B subfamily. Prokaryotic type I sub-subfamily. Heterodimer of a large membrane-associated beta subunit and a small pyruvoyl-containing alpha subunit. Pyruvate is required as a cofactor. Is synthesized initially as an inactive proenzyme. Formation of the active enzyme involves a self-maturation process in which the active site pyruvoyl group is generated from an internal serine residue via an autocatalytic post-translational modification. Two non-identical subunits are generated from the proenzyme in this reaction, and the pyruvate is formed at the N-terminus of the alpha chain, which is derived from the carboxyl end of the proenzyme. The autoendoproteolytic cleavage occurs by a canonical serine protease mechanism, in which the side chain hydroxyl group of the serine supplies its oxygen atom to form the C-terminus of the beta chain, while the remainder of the serine residue undergoes an oxidative deamination to produce ammonia and the pyruvoyl prosthetic group on the alpha chain. During this reaction, the Ser that is part of the protease active site of the proenzyme becomes the pyruvoyl prosthetic group, which constitutes an essential element of the active site of the mature decarboxylase.

The protein localises to the cell membrane. The catalysed reaction is a 1,2-diacyl-sn-glycero-3-phospho-L-serine + H(+) = a 1,2-diacyl-sn-glycero-3-phosphoethanolamine + CO2. Its pathway is phospholipid metabolism; phosphatidylethanolamine biosynthesis; phosphatidylethanolamine from CDP-diacylglycerol: step 2/2. Catalyzes the formation of phosphatidylethanolamine (PtdEtn) from phosphatidylserine (PtdSer). The sequence is that of Phosphatidylserine decarboxylase proenzyme from Pseudomonas entomophila (strain L48).